The primary structure comprises 252 residues: Phosphoglycolate phosphatase (252 aa).

Catalysis depends on Asp13, which acts as the Nucleophile. Mg(2+) contacts are provided by Asp13, Asp15, and Asp192.

This sequence belongs to the HAD-like hydrolase superfamily. CbbY/CbbZ/Gph/YieH family. In terms of assembly, monomer. Requires Mg(2+) as cofactor. Chloride is required as a cofactor.

The enzyme catalyses 2-phosphoglycolate + H2O = glycolate + phosphate. Its pathway is organic acid metabolism; glycolate biosynthesis; glycolate from 2-phosphoglycolate: step 1/1. Specifically catalyzes the dephosphorylation of 2-phosphoglycolate. Is involved in the dissimilation of the intracellular 2-phosphoglycolate formed during the DNA repair of 3'-phosphoglycolate ends, a major class of DNA lesions induced by oxidative stress. This chain is Phosphoglycolate phosphatase, found in Shigella boydii serotype 4 (strain Sb227).